Consider the following 304-residue polypeptide: MQQAELIERIKELKIKRNAVILAHYYSRPEVQDIADFVGDSLGLSQEAVRQTADVIVFCGVHFMGESAAILCPDKTVLLPEIDATCPMADMVDIEGLRREKEKHPNAVVVCYVNSSAAIKAESYICCTSANAVEVVNSLEAEKVIFVPDKNLAAYVESRTDKKIIPWEGHCPTHHQILREDVLKMKEKHPEAKFIAHPECRPEVLELADHIASTRGMIMYAKNSPAKEFIIGTECGLLHGLHKAAPEKKYYCVSEFACCPSMKMVNLEKVLVSLEKVQHVVTVPYNVRTRAKEALDRMLAVKIR.

Residues His24 and Ser41 each coordinate iminosuccinate. [4Fe-4S] cluster is bound at residue Cys86. Iminosuccinate-binding positions include Tyr112–Asn114 and Ser129. [4Fe-4S] cluster is bound at residue Cys171. Residues His197 to Glu199 and Thr214 contribute to the iminosuccinate site. Position 259 (Cys259) interacts with [4Fe-4S] cluster.

This sequence belongs to the quinolinate synthase family. Type 2 subfamily. [4Fe-4S] cluster serves as cofactor.

The protein localises to the cytoplasm. The catalysed reaction is iminosuccinate + dihydroxyacetone phosphate = quinolinate + phosphate + 2 H2O + H(+). It participates in cofactor biosynthesis; NAD(+) biosynthesis; quinolinate from iminoaspartate: step 1/1. Functionally, catalyzes the condensation of iminoaspartate with dihydroxyacetone phosphate to form quinolinate. The polypeptide is Quinolinate synthase (Methanosarcina barkeri (strain Fusaro / DSM 804)).